A 340-amino-acid chain; its full sequence is Adenosine kinase (340 aa).

D292 is an active-site residue.

Belongs to the carbohydrate kinase PfkB family. The cofactor is Mg(2+).

It carries out the reaction adenosine + ATP = AMP + ADP + H(+). Its pathway is purine metabolism; AMP biosynthesis via salvage pathway; AMP from adenosine: step 1/1. The polypeptide is Adenosine kinase (ado1) (Schizosaccharomyces pombe (strain 972 / ATCC 24843) (Fission yeast)).